A 547-amino-acid chain; its full sequence is CTP synthase (547 aa).

Residues 1-265 (MARYIFITGG…DQAVLDAFQI (265 aa)) form an amidoligase domain region. Ser-13 provides a ligand contact to CTP. Ser-13 provides a ligand contact to UTP. ATP contacts are provided by residues 14-19 (SLGKGL) and Asp-71. Mg(2+) is bound by residues Asp-71 and Glu-139. CTP-binding positions include 146 to 148 (DIE), 186 to 191 (KTKPTQ), and Lys-222. UTP contacts are provided by residues 186 to 191 (KTKPTQ) and Lys-222. The Glutamine amidotransferase type-1 domain occupies 291-546 (RIAVVGKYTQ…IRAAMDNERL (256 aa)). Gly-352 contacts L-glutamine. The Nucleophile; for glutamine hydrolysis role is filled by Cys-379. Residues 380 to 383 (LGMQ), Glu-403, and Arg-474 each bind L-glutamine. Catalysis depends on residues His-519 and Glu-521.

The protein belongs to the CTP synthase family. Homotetramer.

It catalyses the reaction UTP + L-glutamine + ATP + H2O = CTP + L-glutamate + ADP + phosphate + 2 H(+). The catalysed reaction is L-glutamine + H2O = L-glutamate + NH4(+). It carries out the reaction UTP + NH4(+) + ATP = CTP + ADP + phosphate + 2 H(+). It participates in pyrimidine metabolism; CTP biosynthesis via de novo pathway; CTP from UDP: step 2/2. Allosterically activated by GTP, when glutamine is the substrate; GTP has no effect on the reaction when ammonia is the substrate. The allosteric effector GTP functions by stabilizing the protein conformation that binds the tetrahedral intermediate(s) formed during glutamine hydrolysis. Inhibited by the product CTP, via allosteric rather than competitive inhibition. Its function is as follows. Catalyzes the ATP-dependent amination of UTP to CTP with either L-glutamine or ammonia as the source of nitrogen. Regulates intracellular CTP levels through interactions with the four ribonucleotide triphosphates. In Paracoccus denitrificans (strain Pd 1222), this protein is CTP synthase.